Consider the following 514-residue polypeptide: Putative exoglucanase type C (514 aa).

The N-terminal stretch at 1–17 (MYRIVATASALIAAARA) is a signal peptide. Residues 18 to 439 (QQVCSLNTET…RDVPNSKVSF (422 aa)) are catalytic. E229 acts as the Nucleophile in catalysis. E234 functions as the Proton donor in the catalytic mechanism. An N-linked (GlcNAc...) asparagine glycan is attached at N287. A compositionally biased stretch (polar residues) spans 408-424 (STKVGSQRGSCATTSGK). Disordered stretches follow at residues 408 to 433 (STKVGSQRGSCATTSGKPSDLERDVP) and 448 to 485 (GSTYKSDGTTPNPPASSSTTGSSTPTNPPAGSVDQWGQ). The interval 440 to 482 (SNIKFGPIGSTYKSDGTTPNPPASSSTTGSSTPTNPPAGSVDQ) is linker. Positions 462–479 (ASSSTTGSSTPTNPPAGS) are enriched in low complexity. The CBM1 domain maps to 478–514 (GSVDQWGQCGGQNYSGPTTCKSPFTCKKINDFYSQCQ). 2 disulfides stabilise this stretch: C486/C503 and C497/C513. A glycan (N-linked (GlcNAc...) asparagine) is linked at N490.

The protein belongs to the glycosyl hydrolase 7 (cellulase C) family.

It catalyses the reaction Hydrolysis of (1-&gt;4)-beta-D-glucosidic linkages in cellulose and cellotetraose, releasing cellobiose from the non-reducing ends of the chains.. The sequence is that of Putative exoglucanase type C from Fusarium oxysporum (Fusarium vascular wilt).